The following is a 387-amino-acid chain: Trichocyst matrix protein T2-C (387 aa).

An N-terminal signal peptide occupies residues 1–19 (MKTIILALALIVLASSTQA). A propeptide spanning residues 20-48 (DVIATIKKIDQSPFGRTLFDTIWLELQTG) is cleaved from the precursor. Residues 51–163 (LDRLLQTLTD…KVLEHQEATA (113 aa)) are a coiled coil. The propeptide occupies 184–239 (KGKATKQPAHKFTKEVASMIQKHFTTSAKKAAKFQHRKGYSKLFKAFATIASKVEQ). A coiled-coil region spans residues 294-333 (TALANAQSDLAALNDVIAQVEASLDTTNQRIENVSADRND).

The protein belongs to the TMP family. In terms of processing, two components are produced by post-translational processing from the precursor peptide.

It is found in the trichocyst. Functionally, structural protein that crystallize inside the trichocyst matrix. In Paramecium tetraurelia, this protein is Trichocyst matrix protein T2-C (T2C).